The following is an 850-amino-acid chain: Transforming growth factor beta receptor type 3 (850 aa).

The N-terminal stretch at methionine 1–alanine 22 is a signal peptide. At glycine 23–threonine 785 the chain is on the extracellular side. Cysteines 54 and 199 form a disulfide. Asparagine 143 and asparagine 491 each carry an N-linked (GlcNAc...) asparagine glycan. The ZP domain occupies lysine 454–cysteine 728. A disordered region spans residues serine 528 to glutamate 557. 2 O-linked (Xyl...) (glycosaminoglycan) serine glycosylation sites follow: serine 533 and serine 544. N-linked (GlcNAc...) asparagine glycosylation is found at asparagine 570, asparagine 589, and asparagine 696. Cystine bridges form between cysteine 638–cysteine 704, cysteine 659–cysteine 728, and cysteine 709–cysteine 721. The tract at residues methionine 735 to proline 749 is interaction with TGF-beta ligand. The chain crosses the membrane as a helical span at residues valine 786–tyrosine 808. Residues serine 809–alanine 850 lie on the Cytoplasmic side of the membrane. The segment covering arginine 817–alanine 833 has biased composition (polar residues). Residues arginine 817–alanine 850 are disordered. The span at serine 835–alanine 850 shows a compositional bias: low complexity. Threonine 839 carries the post-translational modification Phosphothreonine.

In terms of assembly, forms homodimers and homooligomers. Interacts with DYNLT4. Interacts with integrin ITGA5:ITGB1; this interaction promotes the internalization and trafficking of ITGA5:ITGB1 into endocytic vesicles. Interacts with TGFB1, BMP2, BMP5, BMP7 or GDF5 and inhibin A via the ligand binding domains. Interacts with ALK3/BMPR1A; this interaction results in the cell surface retention of BMPR1A. Interacts with ALK6/BMPR1B; this interaction enhances BMPR1B-mediated stimulation of the BMP signaling pathway. Interacts with the scaffolding protein beta-arrestin2/ARRB2; this interaction mediates internalization of TGFBR3 and thus regulates migration, actin cytoskeleton and activation of CDC42. In terms of processing, extensively modified by glycosaminoglycan groups (GAG). Post-translationally, phosphorylated in the cytoplasmic domain by the type II receptor TGFBR2 at THR-839 to mediate recruitment of ARRB2 and subsequent internalization of TGFBR2 and TGFBR3.

The protein localises to the cell membrane. Its subcellular location is the secreted. It is found in the extracellular space. It localises to the extracellular matrix. In terms of biological role, cell surface receptor that regulates diverse cellular processes including cell proliferation, differentiation, migration, and apoptosis. Initiates BMP, inhibin, and TGF-beta signaling pathways by interacting with different ligands including TGFB1, BMP2, BMP5, BMP7 or GDF5. Alternatively, acts as a cell surface coreceptor for BMP ligands, serving to enhance ligand binding by differentially regulating BMPR1A/ALK3 and BMPR1B/ALK6 receptor trafficking. Promotes epithelial cell adhesion, focal adhesion formation and integrin signaling during epithelial cell spreading on fibronectin. By interacting with the scaffolding protein beta-arrestin2/ARRB2, regulates migration or actin cytoskeleton and promotes the activation of CDC42 as well as the inhibition of NF-kappa-B. In gonadotrope cells, acts as an inhibin A coreceptor and regulates follicle-stimulating hormone (FSH) levels and female fertility. Plays a role in the inhibition of directed and random cell migration in epithelial cells by altering the actin cytoskeletal organization. Participates in epithelial-mesenchymal transformation (EMT) upon binding to BMP2 or TGFB2, by activating the PAR6/SMURF1/RHOA pathway. The sequence is that of Transforming growth factor beta receptor type 3 (Tgfbr3) from Mus musculus (Mouse).